Reading from the N-terminus, the 384-residue chain is Shufflon-specific DNA recombinase (384 aa).

A Core-binding (CB) domain is found at 9 to 96 (MSLSRALDKY…LLSSLFNIAR (88 aa)). Positions 118–284 (GRDRRLTSSE…RAWQLVSKLD (167 aa)) constitute a Tyr recombinase domain. Residues Arg-155, Lys-180, His-235, Arg-238, and His-262 contribute to the active site. Tyr-271 (O-(3'-phospho-DNA)-tyrosine intermediate) is an active-site residue.

The protein belongs to the 'phage' integrase family.

Functionally, shufflon-specific DNA recombinase. This Escherichia coli protein is Shufflon-specific DNA recombinase (rci).